A 433-amino-acid chain; its full sequence is MSKKPHSIKVPTQYRATAKILKAALEQQKCIKTLIFAEKHARTRSLHTVLKKFSENRVALEKAIEETGLLRDNPSFDPSLAKILVTELLFGRKELNGESKPVQTVRSYKDRLLNSIRDFGVQRKEPNPRYVRINTNLYSLAEALDYLHKSDWRRKELPADASYADFLTAIKSLAENEFMTDLHVEGVLIFPAKWSNYWVRHPLVHSKRFILQNKATCLAAELLAPPSGATVLDMCAAPGMKTVHICNVMQNKGCIYSVEQDHVRYNTLCEITKDAGCDIVKPILGDALNLTPERFPDVEYILVDPSCSGSGMQNRMTVCDEPKEDKRLQKLQGLQIKILSHAMGAFPNVKRIAYCTCSLWKEENEQVVQRCLQLNPSFKLLSCKKALRNKWHNVGDKDYPNIGKNVLYCQPDSDLTDGIFLALFEKRREGEKD.

S-adenosyl-L-methionine-binding positions include 235 to 241 (CAAPGMK), E259, D286, and D304. The active-site Nucleophile is the C357.

The protein belongs to the class I-like SAM-binding methyltransferase superfamily. RsmB/NOP family.

It carries out the reaction a cytidine in 28S rRNA + S-adenosyl-L-methionine = a 5-methylcytidine in 28S rRNA + S-adenosyl-L-homocysteine + H(+). S-adenosyl-L-methionine-dependent methyltransferase that specifically methylates the C(5) position of a cytosine in 28S rRNA. The sequence is that of 28S rRNA (cytosine-C(5))-methyltransferase from Drosophila melanogaster (Fruit fly).